Here is a 398-residue protein sequence, read N- to C-terminus: Phosphoglycerate kinase (398 aa).

Substrate contacts are provided by residues 23 to 25, Arg38, 61 to 64, Arg120, and Arg153; these read DLN and HFGR. ATP-binding positions include Lys203, Glu325, and 355 to 358; that span reads GGDT.

Belongs to the phosphoglycerate kinase family. Monomer.

The protein resides in the cytoplasm. The catalysed reaction is (2R)-3-phosphoglycerate + ATP = (2R)-3-phospho-glyceroyl phosphate + ADP. The protein operates within carbohydrate degradation; glycolysis; pyruvate from D-glyceraldehyde 3-phosphate: step 2/5. The protein is Phosphoglycerate kinase of Chelativorans sp. (strain BNC1).